The following is a 335-amino-acid chain: Beta-ketoacyl-[acyl-carrier-protein] synthase III (335 aa).

Catalysis depends on residues Cys120 and His261. Residues 262-266 (QANER) are ACP-binding. Asn291 is an active-site residue.

It belongs to the thiolase-like superfamily. FabH family. As to quaternary structure, homodimer.

It is found in the cytoplasm. It carries out the reaction malonyl-[ACP] + acetyl-CoA + H(+) = 3-oxobutanoyl-[ACP] + CO2 + CoA. It participates in lipid metabolism; fatty acid biosynthesis. Functionally, catalyzes the condensation reaction of fatty acid synthesis by the addition to an acyl acceptor of two carbons from malonyl-ACP. Catalyzes the first condensation reaction which initiates fatty acid synthesis and may therefore play a role in governing the total rate of fatty acid production. Possesses both acetoacetyl-ACP synthase and acetyl transacylase activities. Its substrate specificity determines the biosynthesis of branched-chain and/or straight-chain of fatty acids. The chain is Beta-ketoacyl-[acyl-carrier-protein] synthase III from Chlamydia pneumoniae (Chlamydophila pneumoniae).